Here is a 154-residue protein sequence, read N- to C-terminus: Endoribonuclease YbeY (154 aa).

Zn(2+) contacts are provided by His-114, His-118, and His-124.

Belongs to the endoribonuclease YbeY family. It depends on Zn(2+) as a cofactor.

The protein localises to the cytoplasm. Single strand-specific metallo-endoribonuclease involved in late-stage 70S ribosome quality control and in maturation of the 3' terminus of the 16S rRNA. This Anaplasma phagocytophilum (strain HZ) protein is Endoribonuclease YbeY.